A 429-amino-acid chain; its full sequence is Serine--tRNA ligase (429 aa).

235–237 is an L-serine binding site; that stretch reads TAE. 266–268 contacts ATP; it reads RSE. Glutamate 289 provides a ligand contact to L-serine. 353 to 356 contacts ATP; that stretch reads EISS. Position 389 (serine 389) interacts with L-serine.

This sequence belongs to the class-II aminoacyl-tRNA synthetase family. Type-1 seryl-tRNA synthetase subfamily. Homodimer. The tRNA molecule binds across the dimer.

Its subcellular location is the cytoplasm. It carries out the reaction tRNA(Ser) + L-serine + ATP = L-seryl-tRNA(Ser) + AMP + diphosphate + H(+). The enzyme catalyses tRNA(Sec) + L-serine + ATP = L-seryl-tRNA(Sec) + AMP + diphosphate + H(+). It functions in the pathway aminoacyl-tRNA biosynthesis; selenocysteinyl-tRNA(Sec) biosynthesis; L-seryl-tRNA(Sec) from L-serine and tRNA(Sec): step 1/1. In terms of biological role, catalyzes the attachment of serine to tRNA(Ser). Is also able to aminoacylate tRNA(Sec) with serine, to form the misacylated tRNA L-seryl-tRNA(Sec), which will be further converted into selenocysteinyl-tRNA(Sec). This chain is Serine--tRNA ligase, found in Histophilus somni (strain 2336) (Haemophilus somnus).